Reading from the N-terminus, the 216-residue chain is V-type ATP synthase subunit D (216 aa).

Belongs to the V-ATPase D subunit family.

In terms of biological role, produces ATP from ADP in the presence of a proton gradient across the membrane. This chain is V-type ATP synthase subunit D, found in Clostridium botulinum (strain Loch Maree / Type A3).